A 132-amino-acid chain; its full sequence is Putative holo-[acyl-carrier-protein] synthase (132 aa).

The Mg(2+) site is built by D6 and E67.

Belongs to the P-Pant transferase superfamily. AcpS family.

The enzyme catalyses apo-[ACP] + CoA = holo-[ACP] + adenosine 3',5'-bisphosphate + H(+). Its function is as follows. Transfers the 4'-phosphopantetheine moiety from coenzyme A to a Ser of acyl-carrier-protein. This is Putative holo-[acyl-carrier-protein] synthase (new8) from Schizosaccharomyces pombe (strain 972 / ATCC 24843) (Fission yeast).